Consider the following 713-residue polypeptide: Cadherin-13 (713 aa).

A signal peptide spans 1 to 22; sequence MQPATPLVLCVLLSQVLLLTSA. Positions 23 to 138 are excised as a propeptide; that stretch reads EDLDCTPGFQ…RTSPVPRQKR (116 aa). N-linked (GlcNAc...) asparagine glycosylation is found at N52 and N86. 5 consecutive Cadherin domains span residues 139–245, 246–363, 364–477, 478–585, and 584–694; these read SIVV…RPIF, REGP…SPKF, TKKE…SPVF, YPDP…APFI, and FIYP…AAGA. The disordered stretch occupies residues 156–178; the sequence is PRDVGKVVDSDRPEGSKFRLTGK. A compositionally biased stretch (basic and acidic residues) spans 158–172; the sequence is DVGKVVDSDRPEGSK. 7 N-linked (GlcNAc...) asparagine glycosylation sites follow: N382, N489, N500, N530, N598, N638, and N671. Residue G693 is the site of GPI-anchor amidated glycine attachment. A propeptide spans 694–713 (removed in mature form); it reads APHFSAATALLLSLFSLARL.

As to quaternary structure, by contrast to classical cadherins, homodimerization in trans is not mediated by cadherin EC1 domain strand-swapping, but instead through a homophilic adhesive interface which joins two elongated EC1-EC2 domains through a region near their Ca2+-binding sites to form a tetrahedral, X-like shape.

It localises to the cell membrane. Its subcellular location is the cytoplasm. Its function is as follows. Cadherins are calcium-dependent cell adhesion proteins. They preferentially interact with themselves in a homophilic manner in connecting cells; cadherins may thus contribute to the sorting of heterogeneous cell types. May act as a negative regulator of neural cell growth. In Bos taurus (Bovine), this protein is Cadherin-13 (CDH13).